The sequence spans 277 residues: Methyltransferase str3 (277 aa).

It belongs to the methyltransferase superfamily. LaeA methyltransferase family.

It participates in mycotoxin biosynthesis. Methyltransferase; part of the gene cluster that mediates the biosynthesis of strobilurin A, an antifungal polyketide that contains a key beta-methoxyacrylate toxophore that targets the complex III of the mitochondrial electron transport chain. Strobilurin biosynthesis begins with construction of benzoyl CoA by step-wise elimination of ammonia from phenylalanine by the phenylalanine ammonia-lyase str11, oxygenation by str8 and retro-Claisen reaction to form benzoic acid, which is activated to its CoA thiolester benzoyl CoA by the dedicated CoA ligase str10. Benzoyl CoA forms the starter unit for the highly reducing polyketide synthase stpks1 that produces the polyketide prestrobilutin A. The FAD-dependent oxygenase str9 then catalyzes the key oxidative rearrangement responsible for the creation of the beta-methoxyacrylate toxophore. Str9 performs epoxidation of the 2,3 olefin of prestrobilutin A, followed by Meinwald rearrangement to furnish the aldehyde intermediate. Rapid enolization of the aldehyde intermediate would give the beta-methoxyacrylate skeleton and methylations catalyzed by str2 and str3 complete the synthesis and lead to the production of strobilurin A. The short-chain dehydrogenase stl2 and the dehydrogenase str4 play a role in the shunt pathway leading to the production of bolineol. The cluster encodes no obvious halogenase gene that could be involved in production of strobilurin B, nor any obvious dimethylallyl-transferase that could be involved in the production of strobilurin G. It is possible that unknown proteins encoded in, or near, the cluster (such as str1 or stl1) may form new classes of halogenases or dimethylally-transferases, or that the responsible genes are located elsewhere on the genome. Similarly, proteins encoded by str5/str6 hydrolases appear to have no chemical role in the biosynthesis of strobilurin A. Finally, no obvious self-resistance gene is found within the cluster. In Strobilurus tenacellus, this protein is Methyltransferase str3.